A 408-amino-acid chain; its full sequence is LL-diaminopimelate aminotransferase (408 aa).

Substrate is bound by residues Tyr-15 and Gly-42. Pyridoxal 5'-phosphate is bound by residues Tyr-72, 108–109 (SK), Tyr-132, Asn-187, Tyr-218, and 246–248 (SFS). Substrate-binding residues include Lys-109, Tyr-132, and Asn-187. Residue Lys-249 is modified to N6-(pyridoxal phosphate)lysine. The pyridoxal 5'-phosphate site is built by Arg-257 and Asn-292. Substrate contacts are provided by Asn-292 and Arg-388.

It belongs to the class-I pyridoxal-phosphate-dependent aminotransferase family. LL-diaminopimelate aminotransferase subfamily. As to quaternary structure, homodimer. It depends on pyridoxal 5'-phosphate as a cofactor.

The catalysed reaction is (2S,6S)-2,6-diaminopimelate + 2-oxoglutarate = (S)-2,3,4,5-tetrahydrodipicolinate + L-glutamate + H2O + H(+). It functions in the pathway amino-acid biosynthesis; L-lysine biosynthesis via DAP pathway; LL-2,6-diaminopimelate from (S)-tetrahydrodipicolinate (aminotransferase route): step 1/1. Functionally, involved in the synthesis of meso-diaminopimelate (m-DAP or DL-DAP), required for both lysine and peptidoglycan biosynthesis. Catalyzes the direct conversion of tetrahydrodipicolinate to LL-diaminopimelate. This is LL-diaminopimelate aminotransferase from Synechococcus sp. (strain RCC307).